Reading from the N-terminus, the 341-residue chain is Anthranilate phosphoribosyltransferase (341 aa).

5-phospho-alpha-D-ribose 1-diphosphate is bound by residues G79, 82 to 83 (GD), T87, 89 to 92 (NIST), 107 to 115 (KHGNRAVSS), and S119. G79 contributes to the anthranilate binding site. Residue S91 coordinates Mg(2+). An anthranilate-binding site is contributed by N110. Residue R165 participates in anthranilate binding. 2 residues coordinate Mg(2+): D224 and E225.

The protein belongs to the anthranilate phosphoribosyltransferase family. Homodimer. The cofactor is Mg(2+).

The catalysed reaction is N-(5-phospho-beta-D-ribosyl)anthranilate + diphosphate = 5-phospho-alpha-D-ribose 1-diphosphate + anthranilate. It functions in the pathway amino-acid biosynthesis; L-tryptophan biosynthesis; L-tryptophan from chorismate: step 2/5. Functionally, catalyzes the transfer of the phosphoribosyl group of 5-phosphorylribose-1-pyrophosphate (PRPP) to anthranilate to yield N-(5'-phosphoribosyl)-anthranilate (PRA). The sequence is that of Anthranilate phosphoribosyltransferase from Bacillus mycoides (strain KBAB4) (Bacillus weihenstephanensis).